The following is a 396-amino-acid chain: Mevalonate kinase (396 aa).

Residues Lys13, Asn55, Ser135, and 140-146 (GAGLGSS) contribute to the ATP site. Ser146 functions as the Proton donor in the catalytic mechanism. Ser146 and Glu193 together coordinate Mg(2+). Asp204 serves as the catalytic Proton acceptor.

Belongs to the GHMP kinase family. Mevalonate kinase subfamily. In terms of assembly, homodimer. The cofactor is Mg(2+).

The protein resides in the cytoplasm. Its subcellular location is the peroxisome. The enzyme catalyses (R)-mevalonate + ATP = (R)-5-phosphomevalonate + ADP + H(+). Its pathway is isoprenoid biosynthesis; isopentenyl diphosphate biosynthesis via mevalonate pathway; isopentenyl diphosphate from (R)-mevalonate: step 1/3. With respect to regulation, farnesyl pyrophosphate and geranyl pyrophosphate inhibit mevalonate kinase activity by binding competitively at the ATP-binding sites. Functionally, catalyzes the phosphorylation of mevalonate to mevalonate 5-phosphate, a key step in isoprenoid and cholesterol biosynthesis. The sequence is that of Mevalonate kinase from Homo sapiens (Human).